The chain runs to 290 residues: 3-hydroxyacyl-thioester dehydratase Y (290 aa).

The disordered stretch occupies residues 147-169 (FGGARGERPAAPEFPDRHPDARI). Residues 151-169 (RGERPAAPEFPDRHPDARI) are compositionally biased toward basic and acidic residues. Residues 161-271 (PDRHPDARID…AVFRTEVAGS (111 aa)) form the MaoC-like domain.

Belongs to the enoyl-CoA hydratase/isomerase family.

It catalyses the reaction a (3R)-3-hydroxyacyl-CoA = a (2E)-enoyl-CoA + H2O. It carries out the reaction (3R)-hydroxyhexanoyl-CoA = (2E)-hexenoyl-CoA + H2O. The enzyme catalyses (2E)-octenoyl-CoA + H2O = (3R)-hydroxyoctanoyl-CoA. The catalysed reaction is (3R)-3-hydroxydecanoyl-CoA = (2E)-decenoyl-CoA + H2O. It catalyses the reaction (3R)-3-hydroxydodecanoyl-CoA = (2E)-dodecenoyl-CoA + H2O. It carries out the reaction (3R)-hydroxyhexadecanoyl-CoA = (2E)-hexadecenoyl-CoA + H2O. Its function is as follows. Shows trans-enoyl-CoA hydratase/3-hydroxyacyl-CoA dehydratase activity. In vitro, can hydrate various enoyl-CoA such as (2E)-hexenoyl-CoA, (2E)-octenoyl-CoA, (2E)-decenoyl-CoA, (2E)-dodecenoyl-CoA and (2E)-hexadecenoyl-CoA. May contribute to the persistence of the tuberculosis infection by inducing COX-2 expression in macrophages through MAPK-NF-kappaB signaling pathway. This Mycobacterium tuberculosis (strain ATCC 25618 / H37Rv) protein is 3-hydroxyacyl-thioester dehydratase Y.